The primary structure comprises 1165 residues: Error-prone DNA polymerase (1165 aa).

The interval 1111–1165 (SEGLARPPLPTGADLYEPLTYEPLNGDRRDNPDAPAQRLRHPRDVRILPPSRDFH) is disordered. Over residues 1152 to 1165 (PRDVRILPPSRDFH) the composition is skewed to basic and acidic residues.

Belongs to the DNA polymerase type-C family. DnaE2 subfamily.

It is found in the cytoplasm. The catalysed reaction is DNA(n) + a 2'-deoxyribonucleoside 5'-triphosphate = DNA(n+1) + diphosphate. In terms of biological role, DNA polymerase involved in damage-induced mutagenesis and translesion synthesis (TLS). It is not the major replicative DNA polymerase. This Rhodopseudomonas palustris (strain HaA2) protein is Error-prone DNA polymerase.